Here is a 207-residue protein sequence, read N- to C-terminus: Thymidylate kinase (207 aa).

7-14 (GCEGTGKT) is a binding site for ATP.

It belongs to the thymidylate kinase family.

It catalyses the reaction dTMP + ATP = dTDP + ADP. Phosphorylation of dTMP to form dTDP in both de novo and salvage pathways of dTTP synthesis. The protein is Thymidylate kinase of Aster yellows witches'-broom phytoplasma (strain AYWB).